The sequence spans 834 residues: Taste receptor type 1 member 2 (834 aa).

The first 19 residues, methionine 1 to alanine 19, serve as a signal peptide directing secretion. The Extracellular portion of the chain corresponds to glutamate 20–threonine 561. N-linked (GlcNAc...) asparagine glycans are attached at residues asparagine 84, asparagine 292, asparagine 312, asparagine 363, asparagine 423, asparagine 482, and asparagine 522. The chain crosses the membrane as a helical span at residues isoleucine 562–phenylalanine 582. Residues tryptophan 583–proline 597 lie on the Cytoplasmic side of the membrane. A helical transmembrane segment spans residues methionine 598 to glycine 618. Residues leucine 619–alanine 630 are Extracellular-facing. A helical membrane pass occupies residues leucine 631–valine 651. Over cysteine 652–serine 676 the chain is Cytoplasmic. Residues valine 677–leucine 697 form a helical membrane-spanning segment. The Extracellular portion of the chain corresponds to asparagine 698–serine 722. Residues leucine 723–methionine 743 traverse the membrane as a helical segment. Over glycine 744–lysine 755 the chain is Cytoplasmic. A helical transmembrane segment spans residues phenylalanine 756–serine 776. Residues valine 777–aspartate 779 lie on the Extracellular side of the membrane. Residues glycine 780 to leucine 800 traverse the membrane as a helical segment. Residues glycine 801–aspartate 834 are Cytoplasmic-facing.

Belongs to the G-protein coupled receptor 3 family. TAS1R subfamily. As to quaternary structure, forms heterodimers with TAS1R3.

It localises to the cell membrane. Its function is as follows. Putative taste receptor. TAS1R2/TAS1R3 recognizes diverse natural and synthetic sweeteners. This is Taste receptor type 1 member 2 (TAS1R2) from Saimiri sciureus (Common squirrel monkey).